Consider the following 357-residue polypeptide: Protein-arginine kinase (357 aa).

The 232-residue stretch at 24–255 folds into the Phosphagen kinase C-terminal domain; sequence IVISTRLRIA…RQIIEQERVA (232 aa). Residues 27 to 31, His-92, Arg-126, 177 to 181, and 208 to 213 each bind ATP; these read STRLR, RASVM, and RGIYGE. Positions 338-343 match the RDXXRA motif of the pArg binding pocket involved in allosteric regulation motif; sequence RDERRA.

This sequence belongs to the ATP:guanido phosphotransferase family.

It catalyses the reaction L-arginyl-[protein] + ATP = N(omega)-phospho-L-arginyl-[protein] + ADP + H(+). Appears to be allosterically activated by the binding of pArg-containing polypeptides to the pArg-binding pocket localized in the C-terminal domain of McsB. Catalyzes the specific phosphorylation of arginine residues in proteins. The polypeptide is Protein-arginine kinase (Brevibacillus brevis (strain 47 / JCM 6285 / NBRC 100599)).